We begin with the raw amino-acid sequence, 353 residues long: N-methyltransferase (353 aa).

Positions 171, 195, 218, 238, and 252 each coordinate S-adenosyl-L-homocysteine. An S-adenosyl-L-methionine-binding site is contributed by Asp218.

This sequence belongs to the class I-like SAM-binding methyltransferase superfamily. Cation-independent O-methyltransferase family. Homodimer. In terms of tissue distribution, expressed at high levels in all tissues.

It catalyses the reaction 3-methoxytyramine + S-adenosyl-L-methionine = N-methyl-3-methoxytyramine + S-adenosyl-L-homocysteine + H(+). It carries out the reaction mescaline + S-adenosyl-L-methionine = N-methylmescaline + S-adenosyl-L-homocysteine + H(+). The enzyme catalyses tyramine + S-adenosyl-L-methionine = N-methyltyramine + S-adenosyl-L-homocysteine + H(+). The catalysed reaction is 4-hydroxy-3,5-dimethoxyphenethylamine + S-adenosyl-L-methionine = N-methyl-4-hydroxy-3,5-dimethoxyphenethylamine + S-adenosyl-L-homocysteine + H(+). It participates in aromatic compound metabolism. It functions in the pathway alkaloid biosynthesis. N-methyltransferase participating in the biosynthesis of natural products derived from phenylethylamine, including mescaline, a natural hallucinogen potentially used in psychotherapeutic treatments. Catalyzes the N-methylation of many substrates, including 3-methoxytyramine, 5-hydroxy-3,4-dimethoxyphenethylamine, 4-hydroxy-3,5-dimethoxyphenethylamine, tyramine and mescaline. This is N-methyltransferase from Lophophora williamsii (Peyote).